Consider the following 154-residue polypeptide: NADPH-dependent 7-cyano-7-deazaguanine reductase (154 aa).

C52 functions as the Thioimide intermediate in the catalytic mechanism. D59 functions as the Proton donor in the catalytic mechanism. Substrate is bound by residues 74 to 76 and 93 to 94; these read VES and HE.

It belongs to the GTP cyclohydrolase I family. QueF type 1 subfamily.

The protein resides in the cytoplasm. It catalyses the reaction 7-aminomethyl-7-carbaguanine + 2 NADP(+) = 7-cyano-7-deazaguanine + 2 NADPH + 3 H(+). The protein operates within tRNA modification; tRNA-queuosine biosynthesis. In terms of biological role, catalyzes the NADPH-dependent reduction of 7-cyano-7-deazaguanine (preQ0) to 7-aminomethyl-7-deazaguanine (preQ1). The chain is NADPH-dependent 7-cyano-7-deazaguanine reductase from Sinorhizobium medicae (strain WSM419) (Ensifer medicae).